A 189-amino-acid chain; its full sequence is Hypoxanthine/guanine phosphoribosyltransferase (189 aa).

This sequence belongs to the purine/pyrimidine phosphoribosyltransferase family. Archaeal HPRT subfamily. In terms of assembly, homodimer.

Its subcellular location is the cytoplasm. It carries out the reaction IMP + diphosphate = hypoxanthine + 5-phospho-alpha-D-ribose 1-diphosphate. It catalyses the reaction GMP + diphosphate = guanine + 5-phospho-alpha-D-ribose 1-diphosphate. It participates in purine metabolism; IMP biosynthesis via salvage pathway; IMP from hypoxanthine: step 1/1. Catalyzes a salvage reaction resulting in the formation of IMP that is energically less costly than de novo synthesis. The polypeptide is Hypoxanthine/guanine phosphoribosyltransferase (Methanosarcina mazei (strain ATCC BAA-159 / DSM 3647 / Goe1 / Go1 / JCM 11833 / OCM 88) (Methanosarcina frisia)).